The following is a 1960-amino-acid chain: Transcription factor 20 (1960 aa).

Residues 1-18 show a composition bias toward polar residues; the sequence is MQSFREQSSYHGNQQSYP. The tract at residues 1-287 is disordered; it reads MQSFREQSSY…GSNAQAYGTQ (287 aa). Positions 42 to 60 are enriched in gly residues; the sequence is GGTGGSSGSSGSGSGGGRR. Position 60 is an omega-N-methylarginine (arginine 60). Low complexity predominate over residues 61 to 75; sequence GAAAAAAAMASETSG. Residues 122 to 131 show a composition bias toward polar residues; that stretch reads QGSSFGNQYG. Residues 164 to 192 show a composition bias toward low complexity; it reads SAQYQQQASSQQQQQQVQQLRQQLYQSHQ. Residues 193–219 are compositionally biased toward polar residues; it reads PLPQATGQPASSSSHLQPMQRPSTLPS. The segment covering 236 to 259 has biased composition (low complexity); the sequence is QSSASSSSSSSFPSPQRFSQSGQS. Polar residues-rich tracts occupy residues 260 to 270 and 277 to 287; these read YDGSYNVNAGS and VGSNAQAYGTQ. A Glycyl lysine isopeptide (Lys-Gly) (interchain with G-Cter in SUMO2) cross-link involves residue lysine 304. 2 disordered regions span residues 305–328 and 360–392; these read IPQG…SQHV and FHQN…LMQT. 2 stretches are compositionally biased toward low complexity: residues 306–322 and 368–388; these read PQGT…QQQQ and SNPS…TPSP. Serine 419 and serine 430 each carry phosphoserine. Residues 476-748 are disordered; sequence SDALTPQKKT…HGERKGRNEK (273 aa). Polar residues-rich tracts occupy residues 497 to 508 and 537 to 547; these read SCTNSEGSSQPE and LSGQSTSSDTT. Phosphoserine occurs at positions 538, 559, 574, and 583. Lysine 602 is modified (N6-acetyllysine). Over residues 616-628 the composition is skewed to basic and acidic residues; it reads RVEKPGGQDKGSQ. At serine 640 the chain carries Phosphoserine. Residues 665-677 show a composition bias toward low complexity; it reads GNKNGDNNSNHNG. Positions 693-702 are enriched in polar residues; the sequence is TSRTEPSKSP. Residues lysine 710, lysine 733, lysine 748, lysine 823, lysine 832, and lysine 844 each participate in a glycyl lysine isopeptide (Lys-Gly) (interchain with G-Cter in SUMO2) cross-link. The span at 732–748 shows a compositional bias: basic and acidic residues; the sequence is EKGDFTGHGERKGRNEK. Serine 871 is subject to Phosphoserine. Residues lysine 920 and lysine 922 each participate in a glycyl lysine isopeptide (Lys-Gly) (interchain with G-Cter in SUMO2) cross-link. Residues 920 to 1037 form a disordered region; the sequence is KLKSQSGQIK…GDPHHMNPHM (118 aa). Residue lysine 929 forms a Glycyl lysine isopeptide (Lys-Gly) (interchain with G-Cter in SUMO1); alternate linkage. Lysine 929 is covalently cross-linked (Glycyl lysine isopeptide (Lys-Gly) (interchain with G-Cter in SUMO2); alternate). A compositionally biased stretch (polar residues) spans 936–945; that stretch reads SKSQASFNNK. Over residues 946 to 961 the composition is skewed to basic and acidic residues; sequence KSGDHCHPPSIKHESY. A Glycyl lysine isopeptide (Lys-Gly) (interchain with G-Cter in SUMO2) cross-link involves residue lysine 957. Phosphoserine is present on residues serine 966 and serine 1005. Lysine 1015 participates in a covalent cross-link: Glycyl lysine isopeptide (Lys-Gly) (interchain with G-Cter in SUMO2). Omega-N-methylarginine is present on arginine 1024. A Phosphoserine modification is found at serine 1053. Glycyl lysine isopeptide (Lys-Gly) (interchain with G-Cter in SUMO2) cross-links involve residues lysine 1086, lysine 1098, lysine 1137, lysine 1173, lysine 1178, lysine 1183, lysine 1210, lysine 1231, lysine 1267, and lysine 1274. Disordered regions lie at residues 1110–1142, 1162–1285, and 1303–1331; these read AAAQ…DKDG, RCLM…GRLL, and SHSQ…CPAV. Residues 1130 to 1142 are compositionally biased toward basic and acidic residues; that stretch reads DRVRSPLKNDKDG. Positions 1170 to 1191 are leucine-zipper; that stretch reads LPNKGMELKHGSQKLQESCWDL. The Nuclear localization signal signature appears at 1254–1268; that stretch reads RRRVRSFISPIPSKR. A compositionally biased stretch (basic and acidic residues) spans 1304 to 1318; it reads HSQDIKSIPKRDSSK. Phosphoserine is present on serine 1305. Lysine 1309 is covalently cross-linked (Glycyl lysine isopeptide (Lys-Gly) (interchain with G-Cter in SUMO2)). Position 1335 is a phosphoserine (serine 1335). Lysine 1338 participates in a covalent cross-link: Glycyl lysine isopeptide (Lys-Gly) (interchain with G-Cter in SUMO2). A Phosphoserine modification is found at serine 1361. A disordered region spans residues 1384 to 1607; it reads DILSLKSGPP…TKQAVPIVEP (224 aa). Residues lysine 1389, lysine 1409, lysine 1428, and lysine 1446 each participate in a glycyl lysine isopeptide (Lys-Gly) (interchain with G-Cter in SUMO2) cross-link. Basic and acidic residues predominate over residues 1424 to 1451; sequence LHVEKPLPRSSEEWRGSVDDKVKTETHA. Polar residues predominate over residues 1464-1477; it reads MTSTTSQKPGSNQG. Lysine 1510 participates in a covalent cross-link: Glycyl lysine isopeptide (Lys-Gly) (interchain with G-Cter in SUMO2). Position 1522 is a phosphoserine (serine 1522). A Glycyl lysine isopeptide (Lys-Gly) (interchain with G-Cter in SUMO2) cross-link involves residue lysine 1524. Positions 1537–1551 form a DNA-binding region, a.T hook; that stretch reads GKKKGRPIGSVNKQK. Positions 1555–1566 are enriched in pro residues; sequence QPPPPPPQPPQI. The Nuclear localization signal signature appears at 1576–1600; the sequence is KPKKQRQRRERRKPGAQPRKRKTKQ. Basic residues predominate over residues 1578 to 1599; that stretch reads KKQRQRRERRKPGAQPRKRKTK. Lysine 1613 participates in a covalent cross-link: Glycyl lysine isopeptide (Lys-Gly) (interchain with G-Cter in SUMO2). Disordered regions lie at residues 1660-1683 and 1732-1839; these read LVRG…KALP and TLPK…PELE. Serine 1669 carries the post-translational modification Phosphoserine. A phosphothreonine mark is found at threonine 1671, threonine 1762, and threonine 1764. A Nuclear localization signal motif is present at residues 1785–1792; the sequence is RFKRRHRS. The segment at 1829 to 1865 adopts a C2HC pre-PHD-type; degenerate zinc-finger fold; sequence PTTSEGGPELELQIPELPLDSNEFWVHEGCILWANGI. Residues 1885-1933 form a PHD-type zinc finger; that stretch reads MKCSHCQEAGATLGCYNKGCSFRYHYPCAIDADCLLHEENFSVRCPKHK. The tract at residues 1939–1960 is disordered; sequence PLPPLQNKTAKGSLSTEQSERG. The segment covering 1944-1960 has biased composition (polar residues); that stretch reads QNKTAKGSLSTEQSERG.

Homodimer. Interacts with RNF4 and JUN. Expressed in most tissues, except in ovary and prostate. Isoform 1 is exclusively expressed in brain, heart and testis, and this form predominates in liver and kidney. Isoform 2 predominates in lung.

The protein resides in the nucleus. Functionally, transcriptional activator that binds to the regulatory region of MMP3 and thereby controls stromelysin expression. It stimulates the activity of various transcriptional activators such as JUN, SP1, PAX6 and ETS1, suggesting a function as a coactivator. This is Transcription factor 20 (TCF20) from Homo sapiens (Human).